The chain runs to 396 residues: NADH-quinone oxidoreductase subunit D (396 aa).

Belongs to the complex I 49 kDa subunit family. In terms of assembly, NDH-1 is composed of 14 different subunits. Subunits NuoB, C, D, E, F, and G constitute the peripheral sector of the complex.

It is found in the cell inner membrane. It catalyses the reaction a quinone + NADH + 5 H(+)(in) = a quinol + NAD(+) + 4 H(+)(out). NDH-1 shuttles electrons from NADH, via FMN and iron-sulfur (Fe-S) centers, to quinones in the respiratory chain. The immediate electron acceptor for the enzyme in this species is believed to be ubiquinone. Couples the redox reaction to proton translocation (for every two electrons transferred, four hydrogen ions are translocated across the cytoplasmic membrane), and thus conserves the redox energy in a proton gradient. This chain is NADH-quinone oxidoreductase subunit D, found in Mesorhizobium japonicum (strain LMG 29417 / CECT 9101 / MAFF 303099) (Mesorhizobium loti (strain MAFF 303099)).